Consider the following 579-residue polypeptide: Aspartate--tRNA(Asp/Asn) ligase (579 aa).

Glutamate 169 is a binding site for L-aspartate. The tract at residues 193-196 (QLFK) is aspartate. Arginine 215 is an L-aspartate binding site. Residues 215-217 (RDE) and glutamine 224 contribute to the ATP site. Histidine 437 serves as a coordination point for L-aspartate. Glutamate 471 contacts ATP. Residue arginine 478 coordinates L-aspartate. 523–526 (GWDR) contributes to the ATP binding site. The interval 551-579 (DPLTGAPTPITAEQRREAGVDAVPEQATS) is disordered.

The protein belongs to the class-II aminoacyl-tRNA synthetase family. Type 1 subfamily. Homodimer.

It is found in the cytoplasm. It catalyses the reaction tRNA(Asx) + L-aspartate + ATP = L-aspartyl-tRNA(Asx) + AMP + diphosphate. Functionally, aspartyl-tRNA synthetase with relaxed tRNA specificity since it is able to aspartylate not only its cognate tRNA(Asp) but also tRNA(Asn). Reaction proceeds in two steps: L-aspartate is first activated by ATP to form Asp-AMP and then transferred to the acceptor end of tRNA(Asp/Asn). The chain is Aspartate--tRNA(Asp/Asn) ligase from Thermobifida fusca (strain YX).